The following is a 447-amino-acid chain: ATP-dependent protease ATPase subunit HslU (447 aa).

ATP is bound by residues Ile-17, 59 to 64 (GVGKTE), Asp-256, Glu-321, and Arg-393.

It belongs to the ClpX chaperone family. HslU subfamily. In terms of assembly, a double ring-shaped homohexamer of HslV is capped on each side by a ring-shaped HslU homohexamer. The assembly of the HslU/HslV complex is dependent on binding of ATP.

It localises to the cytoplasm. Its function is as follows. ATPase subunit of a proteasome-like degradation complex; this subunit has chaperone activity. The binding of ATP and its subsequent hydrolysis by HslU are essential for unfolding of protein substrates subsequently hydrolyzed by HslV. HslU recognizes the N-terminal part of its protein substrates and unfolds these before they are guided to HslV for hydrolysis. The sequence is that of ATP-dependent protease ATPase subunit HslU from Pseudomonas entomophila (strain L48).